A 176-amino-acid chain; its full sequence is Mitochondrial inner membrane protein Mpv17 (176 aa).

The next 4 membrane-spanning stretches (helical) occupy residues 18–38 (VQVL…QQLV), 53–73 (TMVS…YKVL), 94–114 (GGFA…LNGM), and 131–151 (LITN…LVPL).

This sequence belongs to the peroxisomal membrane protein PXMP2/4 family. In terms of tissue distribution, high levels in heart, kidney, and brain, intermediate levels in testis, and low levels in liver and spleen.

It is found in the mitochondrion inner membrane. Non-selective channel that modulates the membrane potential under normal conditions and oxidative stress, and is involved in mitochondrial homeostasis. Involved in mitochondrial deoxynucleoside triphosphates (dNTP) pool homeostasis and mitochondrial DNA (mtDNA) maintenance. May be involved in the regulation of reactive oxygen species metabolism and the control of oxidative phosphorylation. This Mus musculus (Mouse) protein is Mitochondrial inner membrane protein Mpv17.